A 225-amino-acid polypeptide reads, in one-letter code: Cell division protein SepF (225 aa).

The interval 21–134 (DEYLDEPEPT…GPLFDEGGPL (114 aa)) is disordered. Composition is skewed to basic and acidic residues over residues 28-54 (EPTR…RDFA), 77-86 (RYESPRHSSR), and 115-127 (TRSD…RGPL).

This sequence belongs to the SepF family. As to quaternary structure, homodimer. Interacts with FtsZ.

Its subcellular location is the cytoplasm. Its function is as follows. Cell division protein that is part of the divisome complex and is recruited early to the Z-ring. Probably stimulates Z-ring formation, perhaps through the cross-linking of FtsZ protofilaments. Its function overlaps with FtsA. This chain is Cell division protein SepF, found in Rhodococcus opacus (strain B4).